The primary structure comprises 464 residues: Probable glycine dehydrogenase (decarboxylating) subunit 1 (464 aa).

This sequence belongs to the GcvP family. N-terminal subunit subfamily. As to quaternary structure, the glycine cleavage system is composed of four proteins: P, T, L and H. In this organism, the P 'protein' is a heterodimer of two subunits.

It catalyses the reaction N(6)-[(R)-lipoyl]-L-lysyl-[glycine-cleavage complex H protein] + glycine + H(+) = N(6)-[(R)-S(8)-aminomethyldihydrolipoyl]-L-lysyl-[glycine-cleavage complex H protein] + CO2. In terms of biological role, the glycine cleavage system catalyzes the degradation of glycine. The P protein binds the alpha-amino group of glycine through its pyridoxal phosphate cofactor; CO(2) is released and the remaining methylamine moiety is then transferred to the lipoamide cofactor of the H protein. This Thiobacillus denitrificans (strain ATCC 25259 / T1) protein is Probable glycine dehydrogenase (decarboxylating) subunit 1.